Consider the following 959-residue polypeptide: UPF0182 protein MAE_41360 (959 aa).

9 helical membrane passes run 13–33, 50–70, 99–119, 156–176, 184–204, 239–259, 276–296, 319–339, and 362–382; these read PILL…VVAN, LSWQ…FIFT, LLGL…MLLY, DISS…GLLI, IISI…WANF, LWLT…YLFS, LRHL…HHII, VGQF…IWLG, and FFPY…GTII.

It belongs to the UPF0182 family.

The protein localises to the cell membrane. The polypeptide is UPF0182 protein MAE_41360 (Microcystis aeruginosa (strain NIES-843 / IAM M-2473)).